The following is a 255-amino-acid chain: Tritrans,polycis-undecaprenyl-diphosphate synthase (geranylgeranyl-diphosphate specific) (255 aa).

Residue D34 is part of the active site. A Mg(2+)-binding site is contributed by D34. Residues 35–38, H51, and 79–81 contribute to the substrate site; these read GNRR and STE. The active-site Proton acceptor is N82. Substrate is bound by residues F83, R85, R204, and 210–212; that span reads RIS. E223 lines the Mg(2+) pocket.

The protein belongs to the UPP synthase family. As to quaternary structure, homodimer. Mg(2+) is required as a cofactor.

It catalyses the reaction geranylgeranyl diphosphate + 7 isopentenyl diphosphate = tri-trans,hepta-cis-undecaprenyl diphosphate + 7 diphosphate. In terms of biological role, catalyzes the sequential condensation of isopentenyl diphosphate (IPP) with geranylgeranyl diphosphate (GGPP) to yield (2Z,6Z,10Z,14Z,18Z,22Z,26Z,30E,34E,38E)-undecaprenyl diphosphate (tritrans,heptacis-UPP). It is probably the precursor of glycosyl carrier lipids. The protein is Tritrans,polycis-undecaprenyl-diphosphate synthase (geranylgeranyl-diphosphate specific) of Picrophilus torridus (strain ATCC 700027 / DSM 9790 / JCM 10055 / NBRC 100828 / KAW 2/3).